The sequence spans 89 residues: Small ribosomal subunit protein uS14A (89 aa).

This sequence belongs to the universal ribosomal protein uS14 family. As to quaternary structure, part of the 30S ribosomal subunit. Contacts proteins S3 and S10.

Its function is as follows. Binds 16S rRNA, required for the assembly of 30S particles and may also be responsible for determining the conformation of the 16S rRNA at the A site. The chain is Small ribosomal subunit protein uS14A from Listeria monocytogenes serotype 4b (strain F2365).